The primary structure comprises 222 residues: Vesicle transport v-SNARE 12 (222 aa).

At Ser-2 the chain carries N-acetylserine. Topologically, residues Ser-2–Trp-199 are cytoplasmic. Residues Lys-68–Ala-95 adopt a coiled-coil conformation. Residues Ile-200 to Leu-220 traverse the membrane as a helical; Anchor for type IV membrane protein segment. Residues Ser-221–His-222 are Vesicular-facing.

It belongs to the VTI1 family. In terms of assembly, forms SNARE complexes with the t-SNAREs SYP61 and either SYP41 or SYP42, and with a much lower affinity with SYP51 in the TGN. Also interacts with VPS45, a Sec1 protein, but not with SYP21 or SYP22. Binds to EPSIN2. Core constituent of the SNARE complex required for membrane fusion at the trans-Golgi network. Interacts with SCYL2B. As to expression, expressed in roots, stems, flowers and leaves.

It localises to the golgi apparatus. The protein resides in the trans-Golgi network membrane. It is found in the prevacuolar compartment membrane. The protein localises to the cell membrane. Together with either SYP41 or SYP61, required for membrane fusion; the fusion of phospholipid vesicles containing SYP41 or SYP61 and VTI12 is triggered by YKT61 and YKT62. Functions as a v-SNARE responsible for the docking or fusion of transport vesicles within the trans-Golgi network (TGN) and mediates liposome fusion. Necessary to deliver proteins to the protein storage vacuole (PSV). May be also involved in retrograde traffic to the cis-Golgi. This is Vesicle transport v-SNARE 12 from Arabidopsis thaliana (Mouse-ear cress).